Reading from the N-terminus, the 933-residue chain is Serine/threonine-protein kinase PknD (933 aa).

The Protein kinase domain maps to 4-291; the sequence is YDIIRMIGKG…ELKDDIEQHL (288 aa). ATP-binding positions include 10–18 and Lys33; that span reads IGKGGMGEV. Asp138 functions as the Proton acceptor in the catalytic mechanism.

This sequence belongs to the protein kinase superfamily. Ser/Thr protein kinase family. Post-translationally, autophosphorylated on serine and threonine residues.

The catalysed reaction is L-seryl-[protein] + ATP = O-phospho-L-seryl-[protein] + ADP + H(+). The enzyme catalyses L-threonyl-[protein] + ATP = O-phospho-L-threonyl-[protein] + ADP + H(+). Its function is as follows. Together with the serine/threonine kinase Pkn1, may play a role in the specific interactions with host proteins during intracellular growth. This is Serine/threonine-protein kinase PknD from Chlamydia felis (strain Fe/C-56) (Chlamydophila felis).